Consider the following 62-residue polypeptide: Large ribosomal subunit protein uL29 (62 aa).

This sequence belongs to the universal ribosomal protein uL29 family.

The sequence is that of Large ribosomal subunit protein uL29 from Trichlorobacter lovleyi (strain ATCC BAA-1151 / DSM 17278 / SZ) (Geobacter lovleyi).